The chain runs to 56 residues: Large ribosomal subunit protein bL33 (56 aa).

It belongs to the bacterial ribosomal protein bL33 family.

The chain is Large ribosomal subunit protein bL33 from Nocardioides sp. (strain ATCC BAA-499 / JS614).